The sequence spans 85 residues: UPF0386 protein Bind_1628 (85 aa).

The protein belongs to the UPF0386 family.

In Beijerinckia indica subsp. indica (strain ATCC 9039 / DSM 1715 / NCIMB 8712), this protein is UPF0386 protein Bind_1628.